The primary structure comprises 337 residues: Protein BIG GRAIN 1-like (337 aa).

Disordered regions lie at residues 1 to 32, 120 to 163, and 179 to 235; these read MRDM…PSFS, SAAG…RPAS, and KRPS…PSRS. The segment covering 137–146 has biased composition (basic and acidic residues); it reads HEQPDVEKTA. Composition is skewed to low complexity over residues 150–163 and 195–209; these read PGSA…RPAS and PACS…SSYA.

This sequence belongs to the BIG GRAIN 1 (BG1) plant protein family.

It is found in the cell membrane. Involved in auxin transport. Regulator of the auxin signaling pathway. The protein is Protein BIG GRAIN 1-like of Oryza sativa subsp. japonica (Rice).